Reading from the N-terminus, the 384-residue chain is BTB and MATH domain-containing protein 34 (384 aa).

The stretch at 41–127 (LNGNTTLKRI…ELKFQKEQLK (87 aa)) forms a coiled coil. The MATH domain maps to 167 to 277 (EFSHTFNSVA…VFNFGEYEEI (111 aa)). The region spanning 317–380 (SDAVMIVKDE…LYGEPALTGR (64 aa)) is the BTB domain.

The chain is BTB and MATH domain-containing protein 34 (bath-34) from Caenorhabditis elegans.